The sequence spans 107 residues: RecQ-mediated genome instability protein 2 homolog (107 aa).

The protein belongs to the RMI2 family. Component of the RMI complex, containing at least top-3, rmh-1 and rmh-2. Component of the BTR double Holliday Junction dissolution complex composed of at least him-6, top-3, rmh-1 and rmif-2, which is involved in double strand break repair in the germline. Interacts with rmh-1; the interaction is direct and is required for mutual stability and localization at nuclear foci. Expressed in the germline.

The protein localises to the nucleus. Its function is as follows. Essential component of the RMI complex, a complex that plays an important role in the processing of homologous recombination intermediates. Component of the BTR double Holliday Junction dissolution complex, which is involved in homologous recombination during meiotic double strand break in the germline. Plays a role in double strand break repair by positively regulating the accumulation of rad-51 at double strand breaks. Stabilizes and positively regulates the localization of the BTR double Holliday Junction dissolution complex components rmh-1, him-6 and top-3 at nuclear foci during meiotic recombination. Positively regulates meiotic recombination, chiasma formation, and chromosome segregation in meiosis. Positively regulates DNA crossover formation and positioning on chromosome arms (away from the chromosome center) during homologous recombination. The polypeptide is RecQ-mediated genome instability protein 2 homolog (Caenorhabditis elegans).